Here is a 226-residue protein sequence, read N- to C-terminus: MPDICDSNKLNHRFRGYYPVVIDVETAGFNANTDALLEIAVTLLKMNDDGILVLDKTVHFHIEPFEGANLEPEALAFNGIDPTNPLRGAVSEKEAFLEIFKTVKKGQKASDCHRSIIVAHNAAFDLSFVNKAIERNDLKRSPFHPFASFDTATLAGLSIGHTVLAKACKMAGIDFDNKEAHSALYDTERTAELFCHIVNRWKALGGWPLATPEQSAIENTDEKIES.

Residues 20-194 enclose the Exonuclease domain; the sequence is VVIDVETAGF…YDTERTAELF (175 aa). Residues Asp-23, Glu-25, His-181, and Asp-186 each contribute to the Mg(2+) site. Residue His-181 is the Proton donor/acceptor of the active site.

Belongs to the RNase T family. Homodimer. Mg(2+) is required as a cofactor.

Its function is as follows. Trims short 3' overhangs of a variety of RNA species, leaving a one or two nucleotide 3' overhang. Responsible for the end-turnover of tRNA: specifically removes the terminal AMP residue from uncharged tRNA (tRNA-C-C-A). Also appears to be involved in tRNA biosynthesis. This is Ribonuclease T from Shewanella denitrificans (strain OS217 / ATCC BAA-1090 / DSM 15013).